The sequence spans 225 residues: Myelin-associated neurite-outgrowth inhibitor (225 aa).

Residues 1–58 (MNPVYSPGSSGVPYANAKGIGYPAGFPMGYAAAAPAYSPNMYAGPNPAFQQELEHPAH) lie on the Cytoplasmic side of the membrane. Residues 59 to 75 (VSSGVQMFMFGHAFSVA) traverse the membrane as a helical segment. Residues 76–173 (RNGAIPSGYT…PAPIQSPRGN (98 aa)) lie on the Extracellular side of the membrane. The chain crosses the membrane as a helical span at residues 174 to 193 (GVAMGMVAGTTMAMSAGTLL). Residues 194–225 (TSHYPSPVAPQVTMPTYRPPGTPTYSYVPPQW) lie on the Cytoplasmic side of the membrane.

This sequence belongs to the FAM168 family.

It localises to the cytoplasm. The protein resides in the perinuclear region. Its subcellular location is the cell membrane. It is found in the cell projection. The protein localises to the axon. Its function is as follows. Inhibitor of neuronal axonal outgrowth. The sequence is that of Myelin-associated neurite-outgrowth inhibitor (fam168b) from Xenopus laevis (African clawed frog).